Reading from the N-terminus, the 252-residue chain is Ribosomal RNA small subunit methyltransferase A (252 aa).

Asparagine 10, leucine 12, glycine 36, glutamate 57, aspartate 81, and asparagine 98 together coordinate S-adenosyl-L-methionine.

It belongs to the class I-like SAM-binding methyltransferase superfamily. rRNA adenine N(6)-methyltransferase family. RsmA subfamily.

It is found in the cytoplasm. The catalysed reaction is adenosine(1518)/adenosine(1519) in 16S rRNA + 4 S-adenosyl-L-methionine = N(6)-dimethyladenosine(1518)/N(6)-dimethyladenosine(1519) in 16S rRNA + 4 S-adenosyl-L-homocysteine + 4 H(+). Its function is as follows. Specifically dimethylates two adjacent adenosines (A1518 and A1519) in the loop of a conserved hairpin near the 3'-end of 16S rRNA in the 30S particle. May play a critical role in biogenesis of 30S subunits. The protein is Ribosomal RNA small subunit methyltransferase A of Mycoplasmopsis pulmonis (strain UAB CTIP) (Mycoplasma pulmonis).